The following is a 354-amino-acid chain: 3-isopropylmalate dehydrogenase (354 aa).

76–87 (GPRWDGAKERPE) is a binding site for NAD(+). Arg94, Arg104, Arg130, and Asp215 together coordinate substrate. Residues Asp215, Asp239, and Asp243 each coordinate Mg(2+). NAD(+) is bound at residue 273 to 285 (GSAPDIAGKNKAN).

It belongs to the isocitrate and isopropylmalate dehydrogenases family. LeuB type 1 subfamily. As to quaternary structure, homodimer. It depends on Mg(2+) as a cofactor. The cofactor is Mn(2+).

The protein resides in the cytoplasm. It catalyses the reaction (2R,3S)-3-isopropylmalate + NAD(+) = 4-methyl-2-oxopentanoate + CO2 + NADH. It functions in the pathway amino-acid biosynthesis; L-leucine biosynthesis; L-leucine from 3-methyl-2-oxobutanoate: step 3/4. In terms of biological role, catalyzes the oxidation of 3-carboxy-2-hydroxy-4-methylpentanoate (3-isopropylmalate) to 3-carboxy-4-methyl-2-oxopentanoate. The product decarboxylates to 4-methyl-2 oxopentanoate. The chain is 3-isopropylmalate dehydrogenase from Bacillus anthracis.